Reading from the N-terminus, the 290-residue chain is Isopentenyl-diphosphate Delta-isomerase II (290 aa).

The region spanning 108–260 (MLHRAFTVFL…GLKLSPWFRL (153 aa)) is the Nudix hydrolase domain. Residues Cys145 and Glu207 contribute to the active site.

The protein belongs to the IPP isomerase type 1 family.

It catalyses the reaction isopentenyl diphosphate = dimethylallyl diphosphate. It participates in isoprenoid biosynthesis; dimethylallyl diphosphate biosynthesis; dimethylallyl diphosphate from isopentenyl diphosphate: step 1/1. The protein operates within porphyrin-containing compound metabolism; chlorophyll biosynthesis. Catalyzes the 1,3-allylic rearrangement of the homoallylic substrate isopentenyl (IPP) to its highly electrophilic allylic isomer, dimethylallyl diphosphate (DMAPP). In Clarkia xantiana (Gunsight clarkia), this protein is Isopentenyl-diphosphate Delta-isomerase II (IPI2).